Reading from the N-terminus, the 317-residue chain is tRNA dimethylallyltransferase (317 aa).

Residue 14-21 (GPTAVGKT) coordinates ATP. 16–21 (TAVGKT) contacts substrate. The interaction with substrate tRNA stretch occupies residues 39-42 (DSMQ).

The protein belongs to the IPP transferase family. Monomer. The cofactor is Mg(2+).

It carries out the reaction adenosine(37) in tRNA + dimethylallyl diphosphate = N(6)-dimethylallyladenosine(37) in tRNA + diphosphate. In terms of biological role, catalyzes the transfer of a dimethylallyl group onto the adenine at position 37 in tRNAs that read codons beginning with uridine, leading to the formation of N6-(dimethylallyl)adenosine (i(6)A). The sequence is that of tRNA dimethylallyltransferase from Bacillus mycoides (strain KBAB4) (Bacillus weihenstephanensis).